The primary structure comprises 119 residues: Large ribosomal subunit protein bL20 (119 aa).

The protein belongs to the bacterial ribosomal protein bL20 family.

Functionally, binds directly to 23S ribosomal RNA and is necessary for the in vitro assembly process of the 50S ribosomal subunit. It is not involved in the protein synthesizing functions of that subunit. The polypeptide is Large ribosomal subunit protein bL20 (Gluconacetobacter diazotrophicus (strain ATCC 49037 / DSM 5601 / CCUG 37298 / CIP 103539 / LMG 7603 / PAl5)).